A 1081-amino-acid polypeptide reads, in one-letter code: Zinc finger protein 827 (1081 aa).

Residues 1-10 are compositionally biased toward basic and acidic residues; the sequence is MPRRKQEQPK. A mediates direct interaction with RBBP4 region spans residues 1–14; it reads MPRRKQEQPKRLPS. The disordered stretch occupies residues 1–77; the sequence is MPRRKQEQPK…DTSLGSTTPS (77 aa). The RRK motif; mediates NuRD recruitment to telomeres signature appears at 3-5; that stretch reads RRK. Residues 62–77 are compositionally biased toward polar residues; it reads EQSTSPDTSLGSTTPS. Glycyl lysine isopeptide (Lys-Gly) (interchain with G-Cter in SUMO2) cross-links involve residues K176, K216, and K226. Disordered stretches follow at residues 258-280 and 305-348; these read KKVS…SFLS and EKSS…SLEL. Residues 327 to 344 show a composition bias toward pro residues; that stretch reads VSPPPPPPPPPPPPPPPQ. Residues K360 and K372 each participate in a glycyl lysine isopeptide (Lys-Gly) (interchain with G-Cter in SUMO2) cross-link. 3 consecutive C2H2-type zinc fingers follow at residues 374-396, 402-424, and 433-455; these read FQCP…MVIH, HQCP…MKVH, and FQCQ…MRCH. Glycyl lysine isopeptide (Lys-Gly) (interchain with G-Cter in SUMO2) cross-links involve residues K466, K475, K523, K549, K580, K587, and K597. A disordered region spans residues 525 to 553; that stretch reads EPKEDNGLPTSFTLNTADRPANHTKLKDP. The span at 616 to 627 shows a compositional bias: polar residues; it reads VFSPESEVSTPG. Residues 616–640 are disordered; it reads VFSPESEVSTPGVSEDALKPQEGKG. Basic and acidic residues predominate over residues 631 to 640; sequence DALKPQEGKG. Glycyl lysine isopeptide (Lys-Gly) (interchain with G-Cter in SUMO2) cross-links involve residues K634, K639, and K658. K673 participates in a covalent cross-link: Glycyl lysine isopeptide (Lys-Gly) (interchain with G-Cter in SUMO1); alternate. K673 participates in a covalent cross-link: Glycyl lysine isopeptide (Lys-Gly) (interchain with G-Cter in SUMO2); alternate. Glycyl lysine isopeptide (Lys-Gly) (interchain with G-Cter in SUMO2) cross-links involve residues K704, K710, K742, K778, and K798. 2 C2H2-type zinc fingers span residues 817–839 and 845–867; these read FPCD…LSLH and YKCH…LTVH. Residues K870 and K891 each participate in a glycyl lysine isopeptide (Lys-Gly) (interchain with G-Cter in SUMO2) cross-link. 2 consecutive C2H2-type zinc fingers follow at residues 897-919 and 929-952; these read YSCH…MSLH and ICCT…GTKH. Residues 947–960 show a composition bias toward basic and acidic residues; it reads HIGTKHTGEDRKTP. The interval 947–1013 is disordered; sequence HIGTKHTGED…GSQPSLNSEE (67 aa). K958 is covalently cross-linked (Glycyl lysine isopeptide (Lys-Gly) (interchain with G-Cter in SUMO2)). Residues 961 to 978 are compositionally biased toward low complexity; it reads SESNSPSSSSLSALSDSA. Over residues 979-988 the composition is skewed to basic and acidic residues; the sequence is NSKDDSDGSQ. A Glycyl lysine isopeptide (Lys-Gly) (interchain with G-Cter in SUMO2) cross-link involves residue K1014. 2 consecutive C2H2-type zinc fingers follow at residues 1019–1041 and 1047–1069; these read FECV…LQIH and FECD…KKCH.

It belongs to the krueppel C2H2-type zinc-finger protein family. In terms of assembly, part of a transcription inhibitory ribonucleoprotein complex composed at least of the circular RNA circZNF827, HNRNPK and HNRNPL. Interacts with the nucleosome remodeling and histone deacetylase/NuRD complex. Interacts with RBBP4; the interaction is direct and recruits RBBP4, a component of the NuRD complex, to telomeres.

The protein resides in the nucleus. It is found in the chromosome. It localises to the telomere. Functionally, as part of a ribonucleoprotein complex composed at least of HNRNPK, HNRNPL and the circular RNA circZNF827 that nucleates the complex on chromatin, may negatively regulate the transcription of genes involved in neuronal differentiation. Could also recruit the nucleosome remodeling and histone deacetylase/NuRD complex to telomeric regions of chromosomes to regulate chromatin remodeling as part of telomere maintenance. The chain is Zinc finger protein 827 (ZNF827) from Macaca fascicularis (Crab-eating macaque).